The sequence spans 156 residues: Methylated-DNA--protein-cysteine methyltransferase (156 aa).

Cys-120 acts as the Nucleophile; methyl group acceptor in catalysis.

Belongs to the MGMT family.

It is found in the cytoplasm. The catalysed reaction is a 6-O-methyl-2'-deoxyguanosine in DNA + L-cysteinyl-[protein] = S-methyl-L-cysteinyl-[protein] + a 2'-deoxyguanosine in DNA. The enzyme catalyses a 4-O-methyl-thymidine in DNA + L-cysteinyl-[protein] = a thymidine in DNA + S-methyl-L-cysteinyl-[protein]. Functionally, involved in the cellular defense against the biological effects of O6-methylguanine (O6-MeG) and O4-methylthymine (O4-MeT) in DNA. Repairs the methylated nucleobase in DNA by stoichiometrically transferring the methyl group to a cysteine residue in the enzyme. This is a suicide reaction: the enzyme is irreversibly inactivated. This Sulfurisphaera tokodaii (strain DSM 16993 / JCM 10545 / NBRC 100140 / 7) (Sulfolobus tokodaii) protein is Methylated-DNA--protein-cysteine methyltransferase.